The chain runs to 166 residues: Thiol peroxidase (166 aa).

The 149-residue stretch at 18–166 folds into the Thioredoxin domain; sequence LKVGDKAPDV…NYEALLKVLK (149 aa). Catalysis depends on C60, which acts as the Cysteine sulfenic acid (-SOH) intermediate. C60 and C94 are joined by a disulfide.

It belongs to the peroxiredoxin family. Tpx subfamily. As to quaternary structure, homodimer.

The enzyme catalyses a hydroperoxide + [thioredoxin]-dithiol = an alcohol + [thioredoxin]-disulfide + H2O. Functionally, thiol-specific peroxidase that catalyzes the reduction of hydrogen peroxide and organic hydroperoxides to water and alcohols, respectively. Plays a role in cell protection against oxidative stress by detoxifying peroxides. The protein is Thiol peroxidase of Helicobacter pylori (strain J99 / ATCC 700824) (Campylobacter pylori J99).